Consider the following 31-residue polypeptide: Nemertide alpha-4 (31 aa).

3 disulfide bridges follow: cysteine 2–cysteine 16, cysteine 9–cysteine 20, and cysteine 15–cysteine 26. A 4-hydroxyproline mark is found at proline 28 and proline 29.

This sequence belongs to the nemertide family. Confined to the epidermis and to the mucus layer.

The protein localises to the secreted. Its function is as follows. Potent toxin, demonstrating strong inhibitory effects on insect sodium channels (Nav) and reduced activity on mammalian sodium channels. Potently inhibits inactivation of insect sodium channels of B.germanica (BgNav1) (EC(50)=11.1 nM). Also delays the inactivation of most mammalian Nav (human Nav1.1/SCN1A; EC(50)=92 nM, rat Nav1.2/SCN2A; EC(50)=134.2 nM, rat Nav1.3/SCN3A; EC(50)=12.9 nM, rat Nav1.4/SCN4A; EC(50)=14.6 nM, human Nav1.5/SCN5A; EC(50)=27.8 nM, mouse Nav1.6/SCN8A; EC(50)=123.6 nM, human Nav1.9/SCN9A; EC(50)=80.5 nM). Inactivation is completely prevented by a concentration of 1 uM, resulting in sustained, non-inactivating currents. In addition, the toxin significantly enhances the recovery from inactivation, and the open state is not required for the toxin to interact with the channel. In vivo, injection into brine shrimp (Artemia salina) stops movement or causes death after 24 hours (EC(50)=0.4 uM). This is Nemertide alpha-4 from Lineus sanguineus (Ribbon worm).